Consider the following 357-residue polypeptide: S-adenosylmethionine:tRNA ribosyltransferase-isomerase (357 aa).

This sequence belongs to the QueA family. As to quaternary structure, monomer.

The protein localises to the cytoplasm. It carries out the reaction 7-aminomethyl-7-carbaguanosine(34) in tRNA + S-adenosyl-L-methionine = epoxyqueuosine(34) in tRNA + adenine + L-methionine + 2 H(+). It functions in the pathway tRNA modification; tRNA-queuosine biosynthesis. In terms of biological role, transfers and isomerizes the ribose moiety from AdoMet to the 7-aminomethyl group of 7-deazaguanine (preQ1-tRNA) to give epoxyqueuosine (oQ-tRNA). This chain is S-adenosylmethionine:tRNA ribosyltransferase-isomerase, found in Phenylobacterium zucineum (strain HLK1).